The primary structure comprises 465 residues: Eukaryotic translation initiation factor 3 subunit M (465 aa).

The PCI domain maps to 215 to 383 (EEMSYNHVIL…GEFLVHRATY (169 aa)). The interval 429-465 (AAAESGREGGARGGAGERRRGGGGHQGPREVDLVGGD) is disordered. Basic and acidic residues-rich tracts occupy residues 433 to 448 (SGRE…ERRR) and 455 to 465 (GPREVDLVGGD).

It belongs to the eIF-3 subunit M family. As to quaternary structure, component of the eukaryotic translation initiation factor 3 (eIF-3) complex.

Its subcellular location is the cytoplasm. In terms of biological role, component of the eukaryotic translation initiation factor 3 (eIF-3) complex, which is involved in protein synthesis of a specialized repertoire of mRNAs and, together with other initiation factors, stimulates binding of mRNA and methionyl-tRNAi to the 40S ribosome. The eIF-3 complex specifically targets and initiates translation of a subset of mRNAs involved in cell proliferation. The polypeptide is Eukaryotic translation initiation factor 3 subunit M (Coccidioides immitis (strain RS) (Valley fever fungus)).